The chain runs to 430 residues: Tol-Pal system protein TolB (430 aa).

Positions 1-21 (MKQALRVAFGFLILWASVLHA) are cleaved as a signal peptide.

Belongs to the TolB family. As to quaternary structure, the Tol-Pal system is composed of five core proteins: the inner membrane proteins TolA, TolQ and TolR, the periplasmic protein TolB and the outer membrane protein Pal. They form a network linking the inner and outer membranes and the peptidoglycan layer.

It localises to the periplasm. Its function is as follows. Part of the Tol-Pal system, which plays a role in outer membrane invagination during cell division and is important for maintaining outer membrane integrity. TolB occupies a key intermediary position in the Tol-Pal system because it communicates directly with both membrane-embedded components, Pal in the outer membrane and TolA in the inner membrane. In Shigella flexneri serotype 5b (strain 8401), this protein is Tol-Pal system protein TolB.